The sequence spans 281 residues: Urease accessory protein UreD 2 (281 aa).

This sequence belongs to the UreD family. In terms of assembly, ureD, UreF and UreG form a complex that acts as a GTP-hydrolysis-dependent molecular chaperone, activating the urease apoprotein by helping to assemble the nickel containing metallocenter of UreC. The UreE protein probably delivers the nickel.

Its subcellular location is the cytoplasm. Required for maturation of urease via the functional incorporation of the urease nickel metallocenter. This Pseudomonas syringae pv. tomato (strain ATCC BAA-871 / DC3000) protein is Urease accessory protein UreD 2.